Reading from the N-terminus, the 298-residue chain is Chromatin modification-related protein YNG2 (298 aa).

Residues 20 to 86 (EVRHLLEEIK…KLVQKLQKEK (67 aa)) are a coiled coil. The span at 140–158 (GFSDSASATPTPRNGSSAT) shows a compositional bias: polar residues. A disordered region spans residues 140–206 (GFSDSASATP…EEIEDPLPYE (67 aa)). Positions 174–188 (VKGASSSSAQSSSAS) are enriched in low complexity. A PHD-type zinc finger spans residues 237–288 (NLYCFCQRVSFGEMIGCDNEDCKYEWFHWSCVGITSPPKDDEIWYCPDCASK). Residues Cys240, Cys242, Cys253, Cys258, His264, Cys267, Cys282, and Cys285 each contribute to the Zn(2+) site.

It belongs to the ING family. Interacts with H3K4me3 and to a lesser extent with H3K4me2. Component of the NuA4 histone acetyltransferase complex.

The protein resides in the nucleus. Its function is as follows. Component of the NuA4 histone acetyltransferase complex which is involved in transcriptional activation of selected genes principally by acetylation of nucleosomal histone H4 and H2A. The NuA4 complex is also involved in DNA repair. Involved in cell cycle progression and meiosis. This chain is Chromatin modification-related protein YNG2 (YNG2), found in Candida albicans (strain SC5314 / ATCC MYA-2876) (Yeast).